Here is a 212-residue protein sequence, read N- to C-terminus: MEITCPDWTHETAALAEGFTCVVGVDEVGRGPLAGPVTAAAVRLFPGRIPEGLNDSKKLTALRREMLAAEIHTVAEVSIAHASVEEIDRLNILQASHLAMGRALAGLPSRPDFALIDGHMVPKGLGHRCRAIVKGDALCLSIAAASIVAKVARDRIMVDLEQQHPGYGWRTNAGYGTKDHLQALLNLGPTPHHRRSFKPVHNILYQEASISP.

Residues Thr20 to Ser209 enclose the RNase H type-2 domain. A divalent metal cation is bound by residues Asp26, Glu27, and Asp117.

Belongs to the RNase HII family. Requires Mn(2+) as cofactor. It depends on Mg(2+) as a cofactor.

It is found in the cytoplasm. The catalysed reaction is Endonucleolytic cleavage to 5'-phosphomonoester.. Its function is as follows. Endonuclease that specifically degrades the RNA of RNA-DNA hybrids. The polypeptide is Ribonuclease HII (Cereibacter sphaeroides (strain ATCC 17029 / ATH 2.4.9) (Rhodobacter sphaeroides)).